A 328-amino-acid chain; its full sequence is dTDP-4-dehydrorhamnose 3,5-epimerase (328 aa).

Residues arginine 23, glutamate 28, 46–48 (QEN), and arginine 58 each bind substrate. The Proton acceptor role is filled by histidine 61. Positions 70 and 117 each coordinate substrate. The Proton donor role is filled by tyrosine 130. Residues glutamate 141 and lysine 166 each coordinate substrate.

It belongs to the dTDP-4-dehydrorhamnose 3,5-epimerase family. In terms of assembly, homodimer.

The catalysed reaction is dTDP-4-dehydro-6-deoxy-alpha-D-glucose = dTDP-4-dehydro-beta-L-rhamnose. It participates in carbohydrate biosynthesis; dTDP-L-rhamnose biosynthesis. It functions in the pathway bacterial outer membrane biogenesis; LPS O-antigen biosynthesis. Catalyzes the epimerization of the C3' and C5'positions of dTDP-6-deoxy-D-xylo-4-hexulose, forming dTDP-6-deoxy-L-lyxo-4-hexulose. In Neisseria gonorrhoeae, this protein is dTDP-4-dehydrorhamnose 3,5-epimerase (rfbC).